Consider the following 118-residue polypeptide: Large ribosomal subunit protein uL18 (118 aa).

The protein belongs to the universal ribosomal protein uL18 family. In terms of assembly, part of the 50S ribosomal subunit; part of the 5S rRNA/L5/L18/L25 subcomplex. Contacts the 5S and 23S rRNAs.

In terms of biological role, this is one of the proteins that bind and probably mediate the attachment of the 5S RNA into the large ribosomal subunit, where it forms part of the central protuberance. The protein is Large ribosomal subunit protein uL18 of Acidobacterium capsulatum (strain ATCC 51196 / DSM 11244 / BCRC 80197 / JCM 7670 / NBRC 15755 / NCIMB 13165 / 161).